The following is a 539-amino-acid chain: F-box/WD-40 repeat-containing protein At5g21040 (539 aa).

An F-box domain is found at 65-111; sequence STTIIDLPQALISEILNCLDPKELGLVSCVSTYLHRLASEHHAWKEF. 7 WD repeats span residues 160–199, 201–239, 255–292, 294–330, 334–373, 382–419, and 433–477; these read GHTE…SIAA, KPLG…RNLF, GHEG…CVKT, RHSD…PLAI, AHEG…SETS, PHTS…KTNR, and PPQR…EIER. Positions 505–539 are disordered; that stretch reads GRPDQCSIAAHKNPINGERNRAWHSKRRASGKAKA. Over residues 526–539 the composition is skewed to basic residues; sequence AWHSKRRASGKAKA.

This is F-box/WD-40 repeat-containing protein At5g21040 from Arabidopsis thaliana (Mouse-ear cress).